A 458-amino-acid chain; its full sequence is tRNA modification GTPase MnmE (458 aa).

Residues arginine 22, glutamate 84, and arginine 123 each coordinate (6S)-5-formyl-5,6,7,8-tetrahydrofolate. The 160-residue stretch at 220-379 folds into the TrmE-type G domain; the sequence is GIATAIIGRP…LEKAIADLFF (160 aa). Asparagine 230 is a binding site for K(+). Residues 230–235, 249–255, and 274–277 contribute to the GTP site; these read NVGKSS, TDIAGTT, and DTAG. Serine 234 lines the Mg(2+) pocket. K(+)-binding residues include threonine 249, isoleucine 251, and threonine 254. Position 255 (threonine 255) interacts with Mg(2+). Lysine 458 is a (6S)-5-formyl-5,6,7,8-tetrahydrofolate binding site.

It belongs to the TRAFAC class TrmE-Era-EngA-EngB-Septin-like GTPase superfamily. TrmE GTPase family. As to quaternary structure, homodimer. Heterotetramer of two MnmE and two MnmG subunits. The cofactor is K(+).

It localises to the cytoplasm. Functionally, exhibits a very high intrinsic GTPase hydrolysis rate. Involved in the addition of a carboxymethylaminomethyl (cmnm) group at the wobble position (U34) of certain tRNAs, forming tRNA-cmnm(5)s(2)U34. The protein is tRNA modification GTPase MnmE of Bacillus cereus (strain ZK / E33L).